The following is a 47-amino-acid chain: MAKGKRTFQPNNRRRAKVHGFRLRMRTRAGRAIVTARRAKGRRSLTA.

This sequence belongs to the bacterial ribosomal protein bL34 family.

The protein is Large ribosomal subunit protein bL34 of Mycolicibacterium vanbaalenii (strain DSM 7251 / JCM 13017 / BCRC 16820 / KCTC 9966 / NRRL B-24157 / PYR-1) (Mycobacterium vanbaalenii).